The chain runs to 113 residues: Iron-sulfur cluster insertion protein ErpA (113 aa).

Residues cysteine 41, cysteine 105, and cysteine 107 each coordinate iron-sulfur cluster.

Belongs to the HesB/IscA family. Homodimer. Requires iron-sulfur cluster as cofactor.

Functionally, required for insertion of 4Fe-4S clusters for at least IspG. The chain is Iron-sulfur cluster insertion protein ErpA from Glaesserella parasuis serovar 5 (strain SH0165) (Haemophilus parasuis).